We begin with the raw amino-acid sequence, 147 residues long: Large ribosomal subunit protein uL13 (147 aa).

This sequence belongs to the universal ribosomal protein uL13 family. Part of the 50S ribosomal subunit.

Functionally, this protein is one of the early assembly proteins of the 50S ribosomal subunit, although it is not seen to bind rRNA by itself. It is important during the early stages of 50S assembly. The protein is Large ribosomal subunit protein uL13 of Rhodococcus opacus (strain B4).